Here is a 356-residue protein sequence, read N- to C-terminus: 3-dehydroquinate synthase (356 aa).

NAD(+) contacts are provided by residues 69–74, 103–107, 127–128, Lys140, and Lys149; these read DGEQYK, GVVGD, and TT. Positions 182, 245, and 262 each coordinate Zn(2+).

This sequence belongs to the sugar phosphate cyclases superfamily. Dehydroquinate synthase family. Requires Co(2+) as cofactor. Zn(2+) is required as a cofactor. It depends on NAD(+) as a cofactor.

It is found in the cytoplasm. The catalysed reaction is 7-phospho-2-dehydro-3-deoxy-D-arabino-heptonate = 3-dehydroquinate + phosphate. The protein operates within metabolic intermediate biosynthesis; chorismate biosynthesis; chorismate from D-erythrose 4-phosphate and phosphoenolpyruvate: step 2/7. Its function is as follows. Catalyzes the conversion of 3-deoxy-D-arabino-heptulosonate 7-phosphate (DAHP) to dehydroquinate (DHQ). The polypeptide is 3-dehydroquinate synthase (Pseudoalteromonas translucida (strain TAC 125)).